The sequence spans 478 residues: Adenosylhomocysteinase (478 aa).

3 residues coordinate substrate: threonine 56, aspartate 139, and glutamate 201. 202 to 204 (TTT) serves as a coordination point for NAD(+). Substrate is bound by residues lysine 231 and aspartate 235. NAD(+)-binding positions include asparagine 236, 265 to 270 (GYGDVG), glutamate 288, asparagine 323, 344 to 346 (IGH), and asparagine 392.

This sequence belongs to the adenosylhomocysteinase family. NAD(+) serves as cofactor.

It is found in the cytoplasm. It catalyses the reaction S-adenosyl-L-homocysteine + H2O = L-homocysteine + adenosine. It participates in amino-acid biosynthesis; L-homocysteine biosynthesis; L-homocysteine from S-adenosyl-L-homocysteine: step 1/1. May play a key role in the regulation of the intracellular concentration of adenosylhomocysteine. The chain is Adenosylhomocysteinase from Corynebacterium diphtheriae (strain ATCC 700971 / NCTC 13129 / Biotype gravis).